A 122-amino-acid chain; its full sequence is Large ribosomal subunit protein uL14 (122 aa).

The protein belongs to the universal ribosomal protein uL14 family. In terms of assembly, part of the 50S ribosomal subunit. Forms a cluster with proteins L3 and L19. In the 70S ribosome, L14 and L19 interact and together make contacts with the 16S rRNA in bridges B5 and B8.

Its function is as follows. Binds to 23S rRNA. Forms part of two intersubunit bridges in the 70S ribosome. The polypeptide is Large ribosomal subunit protein uL14 (Rhodopseudomonas palustris (strain HaA2)).